The sequence spans 430 residues: Spermatogenic leucine zipper protein 1 (430 aa).

The interval 1 to 25 (MASSAKSAEMPTISKTVNPTPDPHQ) is disordered. The stretch at 62–102 (EQQTAQKFNNLLKEIKDILKNMAGFEEKITEAKELFEETNI) forms a coiled coil. Residue serine 107 is modified to Phosphoserine. The segment at 166–177 (KINEMLSTNLPV) is helix-loop-helix motif. The interval 178–244 (SLAPEKEDNE…NVQEETMKIR (67 aa)) is basic motif. 2 coiled-coil regions span residues 214 to 269 (LEEK…KLIK) and 316 to 351 (SLQL…TLQE). Serine 258 bears the Phosphoserine mark. Positions 303-324 (LEEQVKKLSHDTYSLQLMAALL) are leucine-zipper.

In terms of assembly, interacts with PPP1CC isoform gamma-2. Post-translationally, phosphorylated by MAPK1/ERK2 and MAPK3/ERK1. In terms of tissue distribution, specifically and strongly expressed in the testis. Expressed in several tumor cell lines.

It is found in the cytoplasm. The protein localises to the nucleus. Transcription factor that binds to the DNA sequence 5'-CANNTG-3'(E box) and the G-box motif. May play an important role in the regulation of cell proliferation and differentiation during spermatogenesis. This Homo sapiens (Human) protein is Spermatogenic leucine zipper protein 1 (SPZ1).